The chain runs to 460 residues: GTPase Der (460 aa).

EngA-type G domains follow at residues Q2–F164 and I196–T368. Residues G8–S15, D55–L59, N116–D119, G202–S209, D249–I253, and N313–D316 contribute to the GTP site. Residues Q369–G453 form the KH-like domain.

It belongs to the TRAFAC class TrmE-Era-EngA-EngB-Septin-like GTPase superfamily. EngA (Der) GTPase family. In terms of assembly, associates with the 50S ribosomal subunit.

In terms of biological role, GTPase that plays an essential role in the late steps of ribosome biogenesis. The sequence is that of GTPase Der from Campylobacter jejuni subsp. jejuni serotype O:23/36 (strain 81-176).